Here is a 358-residue protein sequence, read N- to C-terminus: Phospho-N-acetylmuramoyl-pentapeptide-transferase (358 aa).

10 helical membrane-spanning segments follow: residues 21-41 (YLTLRAILGVLTALVISFVVG), 71-91 (TMGGALILVAIAAATLLWADL), 95-115 (YIWVVLVVTLLFGGVGFVDDY), 133-153 (FWQSVIALGVALFLYFTASVA), 166-186 (VAVNLGGYYVLLTYFVVVGSS), 197-217 (GLAVLPTVLVGGALGIFAYAA), 234-254 (AGELVVFCGALVGAGLGFLWF), 261-281 (VFMGDIGALALGAALGILAVL), 286-306 (LVLFIMGGVFVVETVSVMLQV), and 337-357 (IVRFWIITVILVLIGLATLKI).

Belongs to the glycosyltransferase 4 family. MraY subfamily. It depends on Mg(2+) as a cofactor.

It localises to the cell inner membrane. It catalyses the reaction UDP-N-acetyl-alpha-D-muramoyl-L-alanyl-gamma-D-glutamyl-meso-2,6-diaminopimeloyl-D-alanyl-D-alanine + di-trans,octa-cis-undecaprenyl phosphate = di-trans,octa-cis-undecaprenyl diphospho-N-acetyl-alpha-D-muramoyl-L-alanyl-D-glutamyl-meso-2,6-diaminopimeloyl-D-alanyl-D-alanine + UMP. It participates in cell wall biogenesis; peptidoglycan biosynthesis. Its function is as follows. Catalyzes the initial step of the lipid cycle reactions in the biosynthesis of the cell wall peptidoglycan: transfers peptidoglycan precursor phospho-MurNAc-pentapeptide from UDP-MurNAc-pentapeptide onto the lipid carrier undecaprenyl phosphate, yielding undecaprenyl-pyrophosphoryl-MurNAc-pentapeptide, known as lipid I. In Nitrosococcus oceani (strain ATCC 19707 / BCRC 17464 / JCM 30415 / NCIMB 11848 / C-107), this protein is Phospho-N-acetylmuramoyl-pentapeptide-transferase.